A 152-amino-acid polypeptide reads, in one-letter code: Protein FYV5 (152 aa).

Helical transmembrane passes span 26–46 (IISI…RICS), 56–76 (LISS…SCVL), 82–102 (VGII…VLFL), 106–126 (LIDL…TPFF), and 127–147 (FMLH…YLII).

It is found in the cell membrane. Its subcellular location is the secreted. It localises to the cell wall. Involved in maintaining an adequate ionic strength homeostasis of the cellular aqueous environment, necessary for normal growth rate. Required for survival upon exposure to K1 killer toxin and hence plays a role in cell wall glucan synthesis. Required for dithiothreitol (DTT) resistance. Involved in cell cycle progression. This chain is Protein FYV5 (FYV5), found in Saccharomyces cerevisiae (strain ATCC 204508 / S288c) (Baker's yeast).